The primary structure comprises 124 residues: Succinate dehydrogenase cytochrome b556 subunit (124 aa).

Residues 1–29 (MTKTKQEIYNKRPTSPHLTIYKPQISSTL) are Cytoplasmic-facing. A helical transmembrane segment spans residues 30 to 55 (SILYRMTGVALFFAVSILVWWLILSK). Residues 56-67 (YDNNYLQLAECC) are Periplasmic-facing. The chain crosses the membrane as a helical span at residues 68–88 (IIKICLVAVSYAWFYHLCNGI). H83 lines the heme pocket. Over 89 to 103 (RHLFWDIGYGFSIKL) the chain is Cytoplasmic. A helical transmembrane segment spans residues 104 to 124 (VNITGWCVVVGSVLLTVLLWV).

Belongs to the cytochrome b560 family. In terms of assembly, part of an enzyme complex containing four subunits: a flavoprotein, an iron-sulfur protein, plus two membrane-anchoring proteins, SdhC and SdhD. The complex can form homotrimers. Heme serves as cofactor.

Its subcellular location is the cell inner membrane. It participates in carbohydrate metabolism; tricarboxylic acid cycle. Functionally, membrane-anchoring subunit of succinate dehydrogenase (SDH). This chain is Succinate dehydrogenase cytochrome b556 subunit (sdhC), found in Rickettsia conorii (strain ATCC VR-613 / Malish 7).